A 599-amino-acid chain; its full sequence is Transcription factor COE4 (599 aa).

The segment at 64–67 (RKSN) is interaction with DNA. The segment at 152–171 (CRVLLTHEIMCSRCCDRKSC) adopts a C5-type zinc-finger fold. Interaction with DNA stretches follow at residues 198–205 (NCLKNAGN) and 237–240 (NNSK). Residues 256–339 (PCIKAISPGE…KGAPGRFVYT (84 aa)) form the IPT/TIG domain. Disordered stretches follow at residues 449 to 473 (GYARSCGSASPRFAPSPGSQQSSYG) and 556 to 586 (VLRPPSSPSQACPRAHREGLPDQPFEDTDKF). Positions 464–473 (SPGSQQSSYG) are enriched in low complexity.

The protein belongs to the COE family. In terms of assembly, forms either a homodimer or a heterodimer with a related family member. Expressed in the olfactory epithelium, including in both neuronal and basal cell layers. Absent in the vomeronasal organ. Absent from NK cells and CD8(+) T cells.

The protein resides in the nucleus. Functionally, transcription factor. Positively modulates transcription, perhaps less strongly than other early B cell factor/EBF family proteins. Binds an EBF1/Olf-1 consensus site in vitro. The sequence is that of Transcription factor COE4 (Ebf4) from Mus musculus (Mouse).